Reading from the N-terminus, the 111-residue chain is uncharacterized protein (111 aa).

Positions 1–26 (MDLKDGVEEEEGAGENGKGGTHAQRV) are disordered.

This is an uncharacterized protein from Caenorhabditis elegans.